We begin with the raw amino-acid sequence, 387 residues long: Sorting nexin-7 (387 aa).

The PX domain occupies 30–151; sequence KDLFITVDEP…IFLTAQAWEL (122 aa). A 1,2-diacyl-sn-glycero-3-phospho-(1D-myo-inositol-3-phosphate)-binding residues include Arg-73, Gln-75, Lys-103, and Arg-117. The region spanning 178 to 387 is the BAR domain; it reads GVKNRPEEFM…HLEEASEDKP (210 aa).

The protein belongs to the sorting nexin family. Heterodimer; heterodimerizes with SNX4.

It localises to the early endosome membrane. Its function is as follows. Involved in the regulation of endocytosis and in several stages of intracellular trafficking. Together with SNX4, involved in autophagosome assembly by regulating trafficking and recycling of phospholipid scramblase ATG9A. The sequence is that of Sorting nexin-7 from Homo sapiens (Human).